Reading from the N-terminus, the 151-residue chain is Small ribosomal subunit protein uS13 (151 aa).

The segment at 131–151 is disordered; it reads RGQRTKSSFRRGRTVGVKKKQ. Residues 133-151 show a composition bias toward basic residues; the sequence is QRTKSSFRRGRTVGVKKKQ.

The protein belongs to the universal ribosomal protein uS13 family. In terms of assembly, part of the 30S ribosomal subunit. Forms a loose heterodimer with protein S19. Forms two bridges to the 50S subunit in the 70S ribosome.

In terms of biological role, located at the top of the head of the 30S subunit, it contacts several helices of the 16S rRNA. In the 70S ribosome it contacts the 23S rRNA (bridge B1a) and protein L5 of the 50S subunit (bridge B1b), connecting the 2 subunits; these bridges are implicated in subunit movement. The sequence is that of Small ribosomal subunit protein uS13 from Methanopyrus kandleri (strain AV19 / DSM 6324 / JCM 9639 / NBRC 100938).